The sequence spans 37 residues: Cytochrome b6-f complex subunit 5 (37 aa).

A helical membrane pass occupies residues 5-25 (LLDGLVLGLVFATLGGLFYAA).

It belongs to the PetG family. In terms of assembly, the 4 large subunits of the cytochrome b6-f complex are cytochrome b6, subunit IV (17 kDa polypeptide, PetD), cytochrome f and the Rieske protein, while the 4 small subunits are PetG, PetL, PetM and PetN. The complex functions as a dimer.

The protein resides in the cellular thylakoid membrane. Its function is as follows. Component of the cytochrome b6-f complex, which mediates electron transfer between photosystem II (PSII) and photosystem I (PSI), cyclic electron flow around PSI, and state transitions. PetG is required for either the stability or assembly of the cytochrome b6-f complex. The sequence is that of Cytochrome b6-f complex subunit 5 from Mastigocladus laminosus (Fischerella sp.).